The primary structure comprises 659 residues: Mannosyl-oligosaccharide 1,2-alpha-mannosidase IA (659 aa).

The Cytoplasmic portion of the chain corresponds to methionine 1–lysine 48. A helical; Signal-anchor for type II membrane protein transmembrane segment spans residues phenylalanine 49–leucine 69. At proline 70–lysine 659 the chain is on the lumenal side. A disordered region spans residues glutamine 88–alanine 121. The span at alanine 91 to glutamate 113 shows a compositional bias: basic and acidic residues. Cysteine 482 and cysteine 514 are disulfide-bonded. Glutamate 528 serves as the catalytic Proton donor. Threonine 639 serves as a coordination point for Ca(2+).

The protein belongs to the glycosyl hydrolase 47 family. Ca(2+) is required as a cofactor.

The protein localises to the endoplasmic reticulum membrane. The enzyme catalyses N(4)-(alpha-D-Man-(1-&gt;2)-alpha-D-Man-(1-&gt;2)-alpha-D-Man-(1-&gt;3)-[alpha-D-Man-(1-&gt;2)-alpha-D-Man-(1-&gt;3)-[alpha-D-Man-(1-&gt;2)-alpha-D-Man-(1-&gt;6)]-alpha-D-Man-(1-&gt;6)]-beta-D-Man-(1-&gt;4)-beta-D-GlcNAc-(1-&gt;4)-beta-D-GlcNAc)-L-asparaginyl-[protein] (N-glucan mannose isomer 9A1,2,3B1,2,3) + 4 H2O = N(4)-(alpha-D-Man-(1-&gt;3)-[alpha-D-Man-(1-&gt;3)-[alpha-D-Man-(1-&gt;6)]-alpha-D-Man-(1-&gt;6)]-beta-D-Man-(1-&gt;4)-beta-D-GlcNAc-(1-&gt;4)-beta-D-GlcNAc)-L-asparaginyl-[protein] (N-glucan mannose isomer 5A1,2) + 4 beta-D-mannose. It carries out the reaction N(4)-(alpha-D-Man-(1-&gt;2)-alpha-D-Man-(1-&gt;2)-alpha-D-Man-(1-&gt;3)-[alpha-D-Man-(1-&gt;3)-[alpha-D-Man-(1-&gt;2)-alpha-D-Man-(1-&gt;6)]-alpha-D-Man-(1-&gt;6)]-beta-D-Man-(1-&gt;4)-beta-D-GlcNAc-(1-&gt;4)-beta-D-GlcNAc)-L-asparaginyl-[protein] (N-glucan mannose isomer 8A1,2,3B1,3) + 3 H2O = N(4)-(alpha-D-Man-(1-&gt;3)-[alpha-D-Man-(1-&gt;3)-[alpha-D-Man-(1-&gt;6)]-alpha-D-Man-(1-&gt;6)]-beta-D-Man-(1-&gt;4)-beta-D-GlcNAc-(1-&gt;4)-beta-D-GlcNAc)-L-asparaginyl-[protein] (N-glucan mannose isomer 5A1,2) + 3 beta-D-mannose. It participates in protein modification; protein glycosylation. Inhibited by both 1-deoxymannojirimycin and kifunensine. Involved in the maturation of Asn-linked oligosaccharides. Progressively trim alpha-1,2-linked mannose residues from Man(9)GlcNAc(2) to produce Man(5)GlcNAc(2). The polypeptide is Mannosyl-oligosaccharide 1,2-alpha-mannosidase IA (MAN1A1) (Sus scrofa (Pig)).